The primary structure comprises 261 residues: Thiazole synthase (261 aa).

K98 (schiff-base intermediate with DXP) is an active-site residue. Residues G159, 185-186 (AG), and 207-208 (AS) each bind 1-deoxy-D-xylulose 5-phosphate.

The protein belongs to the ThiG family. In terms of assembly, homotetramer. Forms heterodimers with either ThiH or ThiS.

Its subcellular location is the cytoplasm. It carries out the reaction [ThiS sulfur-carrier protein]-C-terminal-Gly-aminoethanethioate + 2-iminoacetate + 1-deoxy-D-xylulose 5-phosphate = [ThiS sulfur-carrier protein]-C-terminal Gly-Gly + 2-[(2R,5Z)-2-carboxy-4-methylthiazol-5(2H)-ylidene]ethyl phosphate + 2 H2O + H(+). Its pathway is cofactor biosynthesis; thiamine diphosphate biosynthesis. Catalyzes the rearrangement of 1-deoxy-D-xylulose 5-phosphate (DXP) to produce the thiazole phosphate moiety of thiamine. Sulfur is provided by the thiocarboxylate moiety of the carrier protein ThiS. In vitro, sulfur can be provided by H(2)S. The chain is Thiazole synthase from Mycobacterium leprae (strain Br4923).